We begin with the raw amino-acid sequence, 310 residues long: ADP-L-glycero-D-manno-heptose-6-epimerase (310 aa).

Residues 10–11 (FI), 31–32 (DN), Lys-38, Lys-53, 75–79 (EGACS), and Asn-92 contribute to the NADP(+) site. Tyr-140 (proton acceptor) is an active-site residue. Lys-144 lines the NADP(+) pocket. Residue Asn-169 coordinates substrate. 2 residues coordinate NADP(+): Val-170 and Lys-178. Lys-178 acts as the Proton acceptor in catalysis. Residues Ser-180, His-187, 201–204 (FEGS), and Arg-209 contribute to the substrate site. Residue Lys-267 is modified to N6-acetyllysine. Tyr-272 provides a ligand contact to substrate.

This sequence belongs to the NAD(P)-dependent epimerase/dehydratase family. HldD subfamily. Homopentamer. Requires NADP(+) as cofactor.

The enzyme catalyses ADP-D-glycero-beta-D-manno-heptose = ADP-L-glycero-beta-D-manno-heptose. Its pathway is nucleotide-sugar biosynthesis; ADP-L-glycero-beta-D-manno-heptose biosynthesis; ADP-L-glycero-beta-D-manno-heptose from D-glycero-beta-D-manno-heptose 7-phosphate: step 4/4. Functionally, catalyzes the interconversion between ADP-D-glycero-beta-D-manno-heptose and ADP-L-glycero-beta-D-manno-heptose via an epimerization at carbon 6 of the heptose. The sequence is that of ADP-L-glycero-D-manno-heptose-6-epimerase from Escherichia coli (strain SMS-3-5 / SECEC).